Consider the following 226-residue polypeptide: ATP-dependent dethiobiotin synthetase BioD (226 aa).

13–18 (DVGKTL) contributes to the ATP binding site. Residue Thr-17 participates in Mg(2+) binding. Lys-38 is an active-site residue. ATP contacts are provided by residues Asp-55, 117–120 (EGAG), 177–178 (NR), 206–208 (PFV), and Glu-213. Residues Asp-55 and Glu-117 each contribute to the Mg(2+) site.

This sequence belongs to the dethiobiotin synthetase family. Homodimer. Requires Mg(2+) as cofactor.

It localises to the cytoplasm. It catalyses the reaction (7R,8S)-7,8-diammoniononanoate + CO2 + ATP = (4R,5S)-dethiobiotin + ADP + phosphate + 3 H(+). Its pathway is cofactor biosynthesis; biotin biosynthesis; biotin from 7,8-diaminononanoate: step 1/2. In terms of biological role, catalyzes a mechanistically unusual reaction, the ATP-dependent insertion of CO2 between the N7 and N8 nitrogen atoms of 7,8-diaminopelargonic acid (DAPA, also called 7,8-diammoniononanoate) to form a ureido ring. This Aeromonas hydrophila subsp. hydrophila (strain ATCC 7966 / DSM 30187 / BCRC 13018 / CCUG 14551 / JCM 1027 / KCTC 2358 / NCIMB 9240 / NCTC 8049) protein is ATP-dependent dethiobiotin synthetase BioD.